A 504-amino-acid polypeptide reads, in one-letter code: Maturase K (504 aa).

Belongs to the intron maturase 2 family. MatK subfamily.

Its subcellular location is the plastid. It is found in the chloroplast. Functionally, usually encoded in the trnK tRNA gene intron. Probably assists in splicing its own and other chloroplast group II introns. This is Maturase K from Lepidium virginicum (Virginia pepperweed).